Reading from the N-terminus, the 224-residue chain is 7-cyano-7-deazaguanine synthase (224 aa).

8 to 18 contacts ATP; that stretch reads LSGGMDSAAVI. Positions 186, 196, 199, and 202 each coordinate Zn(2+).

The protein belongs to the QueC family. The cofactor is Zn(2+).

The enzyme catalyses 7-carboxy-7-deazaguanine + NH4(+) + ATP = 7-cyano-7-deazaguanine + ADP + phosphate + H2O + H(+). It functions in the pathway purine metabolism; 7-cyano-7-deazaguanine biosynthesis. Its function is as follows. Catalyzes the ATP-dependent conversion of 7-carboxy-7-deazaguanine (CDG) to 7-cyano-7-deazaguanine (preQ(0)). The sequence is that of 7-cyano-7-deazaguanine synthase from Xanthomonas euvesicatoria pv. vesicatoria (strain 85-10) (Xanthomonas campestris pv. vesicatoria).